The chain runs to 1008 residues: Pheromone-regulated membrane protein 10 (1008 aa).

Disordered regions lie at residues 1–273 (MSQS…TFLG), 342–384 (KLPE…FYTP), and 477–506 (KNDFKNGPKRMANKIPGRKHGAQKQDTQDE). The span at 70 to 85 (DTIISNASTTNNSSSD) shows a compositional bias: low complexity. Over residues 95-111 (GENSNLPNFNFSANQVH) the composition is skewed to polar residues. Acidic residues-rich tracts occupy residues 116-132 (ANEDDANDDSGEEEDTF) and 143-161 (GSDEDMEADNEGDNVEDKE). Basic and acidic residues predominate over residues 162-186 (EVVNEKEEIADDLHSKSSKTSRESK). Polar residues predominate over residues 188–204 (FNAGTKNSRRSLNSLQR). The span at 205–214 (NETDVTDQLK) shows a compositional bias: basic and acidic residues. Low complexity predominate over residues 215-225 (RTTSTTSSSKR). Positions 226 to 239 (SNSDKRTGFKDILR) are enriched in basic and acidic residues. Residues 346 to 364 (GTSSDQQLDYSDTSASNLI) show a composition bias toward polar residues. Over residues 483–498 (GPKRMANKIPGRKHGA) the composition is skewed to basic residues. 10 helical membrane passes run 683–703 (SPWLCVFLYGLGSSMVCPFAF), 707–727 (WYDVPIAFGVGLCVGYLQFFV), 736–756 (SVFEVTASIVVTFIARAIGSI), 762–782 (FCFSAIAQGSLALILPGYIIL), 800–820 (MFYAIIYSLFLGFGITLGASL), 838–858 (IKQDEFKILFVPLFSACLGLI), 866–886 (LPIMIVIACAGYVGTFFAGKH), 892–912 (VTEFTACIGAFIVGILGNLYS), 917–937 (GMAVAAMLPAIFVQVPSGIAS), and 978–998 (VKVSIGISVGLFASALFVYPF).

The protein belongs to the ThrE exporter (TC 2.A.79) family.

It localises to the membrane. The protein is Pheromone-regulated membrane protein 10 of Debaryomyces hansenii (strain ATCC 36239 / CBS 767 / BCRC 21394 / JCM 1990 / NBRC 0083 / IGC 2968) (Yeast).